We begin with the raw amino-acid sequence, 101 residues long: Putative defensin-like protein 253 (101 aa).

The N-terminal stretch at M1–C23 is a signal peptide. Intrachain disulfides connect C31–C84, C41–C66, C49–C76, and C64–C78.

It belongs to the DEFL family.

The protein resides in the secreted. This chain is Putative defensin-like protein 253 (SCRL15), found in Arabidopsis thaliana (Mouse-ear cress).